A 96-amino-acid polypeptide reads, in one-letter code: SAGA-associated factor 11 (96 aa).

The SGF11-type zinc-finger motif lies at 68–89 (FHCKNCGRDVSANRFAAHLQRC).

This sequence belongs to the SGF11 family. As to quaternary structure, component of the 1.8 MDa SAGA transcription coactivator-HAT complex. SAGA is built of 5 distinct domains with specialized functions. Within the SAGA complex, SUS1, SGF11, SGF73 and UBP8 form an additional subcomplex of SAGA called the DUB module (deubiquitination module). Interacts directly with SGF73, SUS1 and UBP8.

Its subcellular location is the nucleus. Functionally, functions as a component of the transcription regulatory histone acetylation (HAT) complex SAGA. At the promoters, SAGA is required for recruitment of the basal transcription machinery. It influences RNA polymerase II transcriptional activity through different activities such as TBP interaction and promoter selectivity, interaction with transcription activators, and chromatin modification through histone acetylation and deubiquitination. SAGA acetylates nucleosomal histone H3 to some extent (to form H3K9ac, H3K14ac, H3K18ac and H3K23ac). SAGA interacts with DNA via upstream activating sequences (UASs). Involved in transcriptional regulation of a subset of SAGA-regulated genes. Within the SAGA complex, participates in a subcomplex, that specifically deubiquitinates histones H2B. The chain is SAGA-associated factor 11 from Vanderwaltozyma polyspora (strain ATCC 22028 / DSM 70294 / BCRC 21397 / CBS 2163 / NBRC 10782 / NRRL Y-8283 / UCD 57-17) (Kluyveromyces polysporus).